We begin with the raw amino-acid sequence, 511 residues long: Maturase K (511 aa).

It belongs to the intron maturase 2 family. MatK subfamily.

The protein resides in the plastid. It is found in the chloroplast. In terms of biological role, usually encoded in the trnK tRNA gene intron. Probably assists in splicing its own and other chloroplast group II introns. This chain is Maturase K, found in Acorus calamus var. americanus (American sweet flag).